The primary structure comprises 244 residues: UL16-binding protein 1 (244 aa).

A signal peptide spans 1–25 (MAAAASPAFLLCLPLLHLLSGWSRA). Residues 26-117 (GWVDTHCLCY…IQVENLIPIE (92 aa)) are MHC class I alpha-1 like. Cys50 and Cys66 form a disulfide bridge. Residue Asn82 is glycosylated (N-linked (GlcNAc...) asparagine). Residues 118-208 (PLTLQARMSC…MYWEQMLDPT (91 aa)) form an MHC class I alpha-2 like region. Cys127 and Cys190 are joined by a disulfide. Gly216 is lipidated: GPI-anchor amidated glycine. Positions 217–244 (TTQPKAMATTLSPWSLLIIFLCFILAGR) are cleaved as a propeptide — removed in mature form.

This sequence belongs to the MHC class I family. Interacts with KLRK1/NKG2D. Does not bind to beta2-microglobulin. As to quaternary structure, (Microbial infection) In CMV-infected cells, interacts with the viral glycoprotein UL16; this interaction causes ULBP1 retention in the endoplasmic reticulum and cis-Golgi and prevents binding to and activation of KLRK1/NKG2D, providing CMV with an immune evasion mechanism. As to expression, expressed in T-cells, B-cells, erythroleukemia cell lines and in a wide range of tissues including heart, brain, lung, liver, testis, lymph node, thymus, tonsil and bone marrow. Also found in fetal heart, brain, lung and liver.

Its subcellular location is the cell membrane. It is found in the endoplasmic reticulum. In terms of biological role, binds and activates the KLRK1/NKG2D receptor, mediating natural killer cell cytotoxicity. The sequence is that of UL16-binding protein 1 (ULBP1) from Homo sapiens (Human).